Here is a 1478-residue protein sequence, read N- to C-terminus: Serine/threonine-protein kinase BCK1/SLK1/SSP31 (1478 aa).

Disordered stretches follow at residues 1–70 (MPFL…TSSQ), 99–126 (TSFT…GGNS), 217–359 (NVTN…RRHH), and 373–427 (FGSG…KGNL). Low complexity predominate over residues 29 to 49 (PTSSVASTKSSSKSPRATSRK). Composition is skewed to polar residues over residues 58–70 (QFPN…TSSQ) and 99–110 (TSFTNSSYKNDN). A compositionally biased stretch (low complexity) spans 111 to 126 (GPSSLSDSRKSSGGNS). The span at 223-233 (IRQKSASKLKS) shows a compositional bias: basic residues. 2 stretches are compositionally biased toward polar residues: residues 253–273 (DISN…SGPS) and 281–297 (LHST…SSLY). 2 stretches are compositionally biased toward low complexity: residues 298-320 (RRSF…SPSN) and 342-353 (SASPPASPSYPS). Composition is skewed to polar residues over residues 386 to 396 (NPQGHSLSSEN) and 407 to 420 (TNVS…SLPT). T407 carries the phosphothreonine modification. S411 and S491 each carry phosphoserine. The tract at residues 644–671 (KPKPAPLTSENNVPLKSVKSKSSMRSGT) is disordered. The segment covering 659–671 (KSVKSKSSMRSGT) has biased composition (low complexity). At S747 the chain carries Phosphoserine. Disordered stretches follow at residues 752 to 877 (LNLP…ASTH), 895 to 939 (KTDQ…RGNS), 960 to 1021 (ADAP…TQDK), and 1053 to 1116 (TEGI…TPKR). Polar residues predominate over residues 765–777 (TPITENESKSSFQ). Basic and acidic residues predominate over residues 779 to 809 (LRKDEGTEIDFNHRRESPYTKPELAPKREAP). The segment covering 813-827 (ANTSPQRTLSTSKQN) has biased composition (polar residues). S816 carries the post-translational modification Phosphoserine. 2 stretches are compositionally biased toward low complexity: residues 851 to 870 (QLLS…LTSS) and 914 to 925 (NRSNSTVSTSNS). Residues 967–977 (DSDDSDDDSSS) show a composition bias toward acidic residues. Residues 994–1011 (NENKKDEKSDNSSTHSDE) show a composition bias toward basic and acidic residues. Phosphoserine occurs at positions 1058 and 1061. Over residues 1058 to 1083 (SPTSPKSLDSLLSPKNVASSRTEPST) the composition is skewed to low complexity. Position 1134 is a phosphoserine; by PKC (S1134). The Protein kinase domain maps to 1175-1440 (WMKGEMIGKG…ANELLSHPFS (266 aa)). ATP contacts are provided by residues 1181-1189 (IGKGSFGAV) and K1204. D1303 acts as the Proton acceptor in catalysis.

This sequence belongs to the protein kinase superfamily. STE Ser/Thr protein kinase family. MAP kinase kinase kinase subfamily.

It localises to the cytoplasm. The catalysed reaction is L-seryl-[protein] + ATP = O-phospho-L-seryl-[protein] + ADP + H(+). It carries out the reaction L-threonyl-[protein] + ATP = O-phospho-L-threonyl-[protein] + ADP + H(+). Functionally, serine/threonine protein kinase involved in a signal transduction pathway that plays a role in yeast cell morphogenesis and cell growth. This pathway seems to start by SMP3; then involve the kinase PKC1 that may act on this kinase. BCK1 probably phosphorylates MKK1 and MKK2 which themselves phosphorylate the MPK1 kinase. The sequence is that of Serine/threonine-protein kinase BCK1/SLK1/SSP31 (BCK1) from Saccharomyces cerevisiae (strain ATCC 204508 / S288c) (Baker's yeast).